The primary structure comprises 442 residues: Tryptophan synthase beta chain 2 (442 aa).

An N6-(pyridoxal phosphate)lysine modification is found at K122.

The protein belongs to the TrpB family. In terms of assembly, tetramer of two alpha and two beta chains. Requires pyridoxal 5'-phosphate as cofactor.

It catalyses the reaction (1S,2R)-1-C-(indol-3-yl)glycerol 3-phosphate + L-serine = D-glyceraldehyde 3-phosphate + L-tryptophan + H2O. The protein operates within amino-acid biosynthesis; L-tryptophan biosynthesis; L-tryptophan from chorismate: step 5/5. In terms of biological role, the beta subunit is responsible for the synthesis of L-tryptophan from indole and L-serine. The chain is Tryptophan synthase beta chain 2 (trpB2) from Methanosarcina acetivorans (strain ATCC 35395 / DSM 2834 / JCM 12185 / C2A).